The primary structure comprises 585 residues: Protein NRT1/ PTR FAMILY 4.6 (585 aa).

12 consecutive transmembrane segments (helical) span residues 28–48 (GMLAASFVLVVEILENLAYLA), 75–95 (FMGTAFLLALLGGFLSDAFFS), 96–116 (TFQIFLISASIEFLGLIILTI), 142–162 (AMLFVGLYLVALGVGGIKGSL), 184–204 (FFNYFVFCLACGALVAVTFVV), 211–231 (GWEWGFGVSTIAIFVSILIFL), 343–363 (IVLKMLPIFACTIMLNCCLAQ), 391–411 (IFPVVFIMILAPIYDHLIIPF), 428–448 (IGVGLVLSILAMAVAALVEIK), 465–485 (LPVTFLWIALQYLFLGSADLF), 508–528 (SLSWASLAMGYYLSSVIVSIV), and 554–574 (FYWLMCVLSAANFLHYLFWAM).

This sequence belongs to the major facilitator superfamily. Proton-dependent oligopeptide transporter (POT/PTR) (TC 2.A.17) family. As to expression, expressed in root hairs and in epidermis of both root tips and mature regions of roots. Detected in shoots, stems, flowers, siliques and imbibed seeds. Expressed in vascular tissues in cotyledons, trus leaves, hypocotyls, roots and inflorescence stems.

It localises to the cell membrane. Low-affinity proton-dependent nitrate transporter. Involved in constitutive nitrate uptake. Not involved in histidine or dipeptides transport. Involved in (+)-abscisic acid (ABA) transport, but not in gibberellin, indole-3-acetic acid or jasmonic acid import. Mediates cellular ABA uptake. Nitrate does not compete with abscisic acid as a substrate of NPF4.6. This chain is Protein NRT1/ PTR FAMILY 4.6 (NPF4.6), found in Arabidopsis thaliana (Mouse-ear cress).